Consider the following 137-residue polypeptide: Small ribosomal subunit protein uS11A (137 aa).

Ser2 carries the N-acetylserine modification. The segment at Asp117 to Leu137 is disordered. The segment covering Lys128–Leu137 has biased composition (basic residues).

Belongs to the universal ribosomal protein uS11 family. As to quaternary structure, component of the small ribosomal subunit (SSU). Mature yeast ribosomes consist of a small (40S) and a large (60S) subunit. The 40S small subunit contains 1 molecule of ribosomal RNA (18S rRNA) and 33 different proteins (encoded by 57 genes). The large 60S subunit contains 3 rRNA molecules (25S, 5.8S and 5S rRNA) and 46 different proteins (encoded by 81 genes). uS11 interacts with eS1 forming part of the mRNA exit tunnel. uS11 interacts with snoRNA U3. uS11 interacts with MPP10. Component of the ribosomal small subunit (SSU) processome composed of at least 40 protein subunits and snoRNA U3. N-terminally acetylated by acetyltransferase NatA.

Its subcellular location is the cytoplasm. It is found in the nucleus. It localises to the nucleolus. Functionally, component of the ribosome, a large ribonucleoprotein complex responsible for the synthesis of proteins in the cell. The small ribosomal subunit (SSU) binds messenger RNAs (mRNAs) and translates the encoded message by selecting cognate aminoacyl-transfer RNA (tRNA) molecules. The large subunit (LSU) contains the ribosomal catalytic site termed the peptidyl transferase center (PTC), which catalyzes the formation of peptide bonds, thereby polymerizing the amino acids delivered by tRNAs into a polypeptide chain. The nascent polypeptides leave the ribosome through a tunnel in the LSU and interact with protein factors that function in enzymatic processing, targeting, and the membrane insertion of nascent chains at the exit of the ribosomal tunnel. uS11 is involved in nucleolar processing of pre-18S ribosomal RNA and ribosome assembly. This is Small ribosomal subunit protein uS11A from Saccharomyces cerevisiae (strain ATCC 204508 / S288c) (Baker's yeast).